A 373-amino-acid polypeptide reads, in one-letter code: Peptidoglycan recognition protein 4 (373 aa).

A signal peptide spans 1 to 17 (MLPWLLVFSALGIQAWG). Residues asparagine 22, asparagine 39, asparagine 109, asparagine 145, and asparagine 247 are each glycosylated (N-linked (GlcNAc...) asparagine). 2 N-acetylmuramoyl-L-alanine amidase domains span residues 74 to 212 (TPVN…ACPG) and 235 to 358 (YGII…LSPG). Cystine bridges form between cysteine 210/cysteine 332, cysteine 226/cysteine 270, and cysteine 246/cysteine 252. Residues tyrosine 263 and tyrosine 274 each contribute to the peptidoglycan site. Interaction with murein regions lie at residues 293–302 (QGSSTPGYDD) and 353–354 (RT).

It belongs to the N-acetylmuramoyl-L-alanine amidase 2 family. As to quaternary structure, homodimer; disulfide-linked. Heterodimer with PGLYRP3; disulfide-linked. In terms of processing, N-glycosylated. In terms of tissue distribution, detected in skin epidermis, eccrine sweat glands and ducts, mucous cells in the submandibular salivary gland, mucous cells in the throat, ciliary body epithelial cells of the eye, small intestine, colon, stomach and in mature epithelial cells of the tongue (at protein level). High expression in skin and esophagus. Expressed also to a much lesser extent in the tonsils and thymus.

It localises to the secreted. Functionally, pattern receptor that binds to murein peptidoglycans (PGN) of Gram-positive bacteria. Has bactericidal activity towards Gram-positive bacteria. May kill Gram-positive bacteria by interfering with peptidoglycan biosynthesis. Also binds to Gram-negative bacteria, and has bacteriostatic activity towards Gram-negative bacteria. Plays a role in innate immunity. The protein is Peptidoglycan recognition protein 4 (PGLYRP4) of Homo sapiens (Human).